The primary structure comprises 212 residues: Probable nicotinate-nucleotide adenylyltransferase (212 aa).

The protein belongs to the NadD family.

The catalysed reaction is nicotinate beta-D-ribonucleotide + ATP + H(+) = deamido-NAD(+) + diphosphate. The protein operates within cofactor biosynthesis; NAD(+) biosynthesis; deamido-NAD(+) from nicotinate D-ribonucleotide: step 1/1. In terms of biological role, catalyzes the reversible adenylation of nicotinate mononucleotide (NaMN) to nicotinic acid adenine dinucleotide (NaAD). This chain is Probable nicotinate-nucleotide adenylyltransferase, found in Shewanella sp. (strain MR-4).